The following is a 287-amino-acid chain: Protein REVEILLE 2 (287 aa).

The region spanning 31 to 85 (TITKQREKWTEAEHEKFVEALKLYGRAWRRIEEHVGTKTAVQIRSHAQKFFTKVA) is the HTH myb-type domain. The segment at residues 58-81 (WRRIEEHVGTKTAVQIRSHAQKFF) is a DNA-binding region (H-T-H motif). The tract at residues 134–177 (QDEDNRSPTSVLSAHGSDGLGSIGSNSPNSSSAELSSHTEESLS) is disordered. Positions 156-169 (IGSNSPNSSSAELS) are enriched in low complexity.

The protein resides in the nucleus. In terms of biological role, positive regulator for cold-responsive gene expression and cold tolerance. Part of a regulatory feedback loop that controls a subset of the circadian outputs and modulates the central oscillator. Negatively self-regulates its own expression. The sequence is that of Protein REVEILLE 2 (RVE2) from Arabidopsis thaliana (Mouse-ear cress).